An 89-amino-acid chain; its full sequence is UPF0297 protein MGAS9429_Spy1808 (89 aa).

The protein belongs to the UPF0297 family.

This chain is UPF0297 protein MGAS9429_Spy1808, found in Streptococcus pyogenes serotype M12 (strain MGAS9429).